Reading from the N-terminus, the 395-residue chain is Ketoisovalerate oxidoreductase subunit VorA (395 aa).

Heterotetramer of one alpha, one beta, one delta and one gamma chain.

It carries out the reaction 3-methyl-2-oxobutanoate + 2 oxidized [2Fe-2S]-[ferredoxin] + CoA = 2-methylpropanoyl-CoA + 2 reduced [2Fe-2S]-[ferredoxin] + CO2 + H(+). In Pyrococcus abyssi (strain GE5 / Orsay), this protein is Ketoisovalerate oxidoreductase subunit VorA (vorA).